We begin with the raw amino-acid sequence, 132 residues long: MNFKYIIAVSFLIASAYARSEEYDIQSLSQRDVLEEESLRKIRGIGSAILSAGKSIIKGLAKGLAEHFGKRTAEDHEVMKRLEAAMRDLDSLDYPEEASERETRGFNQEEKEKRIIGPVLGLVGKALGGLLG.

Positions 1-18 are cleaved as a signal peptide; it reads MNFKYIIAVSFLIASAYA. A propeptide spanning residues 19–42 is cleaved from the precursor; it reads RSEEYDIQSLSQRDVLEEESLRKI. Phe68 is subject to Phenylalanine amide. Residues 72–112 constitute a propeptide that is removed on maturation; the sequence is TAEDHEVMKRLEAAMRDLDSLDYPEEASERETRGFNQEEKE. The residue at position 131 (Leu131) is a Leucine amide.

It belongs to the bombinin family. As to expression, expressed by the skin glands.

It localises to the secreted. In terms of biological role, has antimicrobial activity against Gram-negative bacterium E.coli (MIC=26.3 uM), Gram-positive bacterium S.aureus (MIC=26.3 uM) and yeast C.albicans (MIC=52.5 uM). Has moderate hemolytic activity towards human erythrocytes at a concentration of 52.2 uM. Functionally, has no antimicrobial activity at concentrations up to 161 uM. Has moderate hemolytic activity towards human erythrocytes at a concentration of 40.3 uM. The protein is Bombinin-like peptides of Bombina orientalis (Oriental fire-bellied toad).